The following is a 336-amino-acid chain: Inositol 2-dehydrogenase (336 aa).

Belongs to the Gfo/Idh/MocA family. Homotetramer.

The enzyme catalyses myo-inositol + NAD(+) = scyllo-inosose + NADH + H(+). Involved in the oxidation of myo-inositol (MI) to 2-keto-myo-inositol (2KMI or 2-inosose). The polypeptide is Inositol 2-dehydrogenase (Pseudomonas fluorescens (strain ATCC BAA-477 / NRRL B-23932 / Pf-5)).